The following is a 712-amino-acid chain: MAGKKGQKKSGLGNHGKNSDMDVEDRLQAVVLTDSYETRFMPLTAVKPRCLLPLANVPLIEYTLEFLAKAGVHEVFLICSSHANQINDYIENSKWNLPWSPFKITTIMSPEARCTGDVMRDLDNRGIITGDFILVSGDVLTNIDFSKMLEFHKKMHLQDKDHISTMCLSKASTYPKTRTIEPAAFVLDKSTSRCIYYQDLPLPSSREKTSIQIDPELLDNVDEFVIRNDLIDCRIDICTSHVPLIFQENFDYQSLRTDFVKGVISSDILGKHIYAYLTDEYAVRVESWQTYDTISQDFLGRWCYPLVLDSNIQDDQTYSYESRHIYKEKDVVLAQSCKIGKCTAIGSGTKIGEGTKIENSVIGRNCQIGENIRIKNSFIWDDCIIGNNSIIDHSLIASNATLGSNVRLNDGCIIGFNVKIDDNMDLDRNTKISASPLKNAGSRMYDNESNEQFDQDLDDQTLAVSIVGDKGVGYIYESEVSDDEDSSTEACKEINTLSNQLDELYLSDDSISSATKKTKKRRTMSVNSIYTDREEIDSEFEDEDFEKEGIATVERAMENNHDLDTALLELNTLRMSMNVTYHEVRIATITALLRRVYHFIATQTLGPKDAVVKVFNQWGLLFKRQAFDEEEYIDLMNIIMEKIVEQSFDKPDLILFSALVSLYDNDIIEEDVIYKWWDNVSTDPRYDEVKKLTVKWVEWLQNADEESSSEEE.

Positions 1–20 are disordered; it reads MAGKKGQKKSGLGNHGKNSD. Phosphoserine occurs at positions 478, 481, 507, 525, 538, and 707. The W2 domain maps to 539 to 710; that stretch reads EFEDEDFEKE…QNADEESSSE (172 aa).

It belongs to the eIF-2B gamma/epsilon subunits family. Component of the translation initiation factor 2B (eIF2B) complex which is a heterodecamer of two sets of five different subunits: alpha, beta, gamma, delta and epsilon. Subunits alpha, beta and delta comprise a regulatory subcomplex and subunits epsilon and gamma comprise a catalytic subcomplex. Within the complex, the hexameric regulatory complex resides at the center, with the two heterodimeric catalytic subcomplexes bound on opposite sides.

It is found in the cytoplasm. Its subcellular location is the cytosol. Acts as a catalytic component of the translation initiation factor 2B (eIF2B) complex, which catalyzes the exchange of GDP for GTP on eukaryotic initiation factor 2 (eIF2) and is regulated by phosphorylated eIF2. Its guanine nucleotide exchange factor activity is repressed when bound to eIF2 complex phosphorylated on the alpha subunit, thereby limiting the amount of methionyl-initiator methionine tRNA available to the ribosome and consequently global translation is repressed. It activates the synthesis of GCN4 in yeast under amino acid starvation conditions by suppressing the inhibitory effects of multiple AUG codons present in the leader of GCN4 mRNA. It may promote either repression or activation of GCN4 expression depending on amino acid availability. GCD6 and GCD7 repress GCN4 expression at the translational level by ensuring that ribosomes which have translated UORF1 will reinitiate at UORF2, -3, or -4 and thus fail to reach the GCN4 start site. This Saccharomyces cerevisiae (strain ATCC 204508 / S288c) (Baker's yeast) protein is Translation initiation factor eIF2B subunit epsilon (GCD6).